Consider the following 121-residue polypeptide: Small ribosomal subunit protein uS13 (121 aa).

Residues 90 to 121 are disordered; sequence RHRRGLPTRGQNTKNNARTRKGPTKTVAGKKK. Residues 106–121 show a composition bias toward basic residues; the sequence is ARTRKGPTKTVAGKKK.

The protein belongs to the universal ribosomal protein uS13 family. As to quaternary structure, part of the 30S ribosomal subunit. Forms a loose heterodimer with protein S19. Forms two bridges to the 50S subunit in the 70S ribosome.

Located at the top of the head of the 30S subunit, it contacts several helices of the 16S rRNA. In the 70S ribosome it contacts the 23S rRNA (bridge B1a) and protein L5 of the 50S subunit (bridge B1b), connecting the 2 subunits; these bridges are implicated in subunit movement. Contacts the tRNAs in the A and P-sites. The polypeptide is Small ribosomal subunit protein uS13 (Enterococcus faecalis (strain ATCC 700802 / V583)).